The chain runs to 220 residues: Deoxyribose-phosphate aldolase 2 (220 aa).

Catalysis depends on Asp-89, which acts as the Proton donor/acceptor. Lys-151 functions as the Schiff-base intermediate with acetaldehyde in the catalytic mechanism. Catalysis depends on Lys-180, which acts as the Proton donor/acceptor.

It belongs to the DeoC/FbaB aldolase family. DeoC type 1 subfamily.

Its subcellular location is the cytoplasm. The enzyme catalyses 2-deoxy-D-ribose 5-phosphate = D-glyceraldehyde 3-phosphate + acetaldehyde. The protein operates within carbohydrate degradation; 2-deoxy-D-ribose 1-phosphate degradation; D-glyceraldehyde 3-phosphate and acetaldehyde from 2-deoxy-alpha-D-ribose 1-phosphate: step 2/2. Catalyzes a reversible aldol reaction between acetaldehyde and D-glyceraldehyde 3-phosphate to generate 2-deoxy-D-ribose 5-phosphate. The chain is Deoxyribose-phosphate aldolase 2 from Staphylococcus aureus (strain COL).